We begin with the raw amino-acid sequence, 296 residues long: Claudin-23 (296 aa).

The Cytoplasmic segment spans residues 1 to 2; the sequence is MR. Residues 3–23 traverse the membrane as a helical segment; sequence TPVVMTLGMVLTPCGLLLNLV. Residues 24–81 are Extracellular-facing; the sequence is STLAPGWRLVKGFLDQPVDVVLYQGLWDICREQSSRERECGQPDEWNYFQTQPVQVAR. The helical transmembrane segment at 82–102 threads the bilayer; that stretch reads GLMITSLATTALGLLLASLGV. Over 103 to 111 the chain is Cytoplasmic; that stretch reads RCWQDEPHY. Residues 112 to 132 traverse the membrane as a helical segment; sequence GLAGLSGVVFFVAGLFSLIPV. Residues 133-160 lie on the Extracellular side of the membrane; the sequence is SWYNHFLSDPDVLAAPSSPVTVQVSYSL. A helical membrane pass occupies residues 161–181; that stretch reads VLGYLGSCLLLLGGFSLALSF. The Cytoplasmic portion of the chain corresponds to 182–296; the sequence is APWCEERCRR…QNSLPCDSDL (115 aa). Residues 224–296 are disordered; it reads YSDGQHRPPP…QNSLPCDSDL (73 aa). The segment covering 273–284 has biased composition (low complexity); the sequence is TSQGGSSSRSTR. Positions 285–296 are enriched in polar residues; sequence PCQNSLPCDSDL.

Belongs to the claudin family.

The protein resides in the cell junction. It localises to the tight junction. The protein localises to the cell membrane. Functionally, plays a major role in tight junction-specific obliteration of the intercellular space, through calcium-independent cell-adhesion activity. The protein is Claudin-23 (Cldn23) of Mus musculus (Mouse).